We begin with the raw amino-acid sequence, 367 residues long: Female-specific protein transformer (367 aa).

A disordered region spans residues 86 to 280; sequence ESISSKKIKS…HRHHRSQERS (195 aa). Residues 109–129 are compositionally biased toward polar residues; that stretch reads VKQNSPDVTQKFTKKYGSSEN. A compositionally biased stretch (basic and acidic residues) spans 130-144; the sequence is PDFRRHSSYEKDNYH. The segment covering 195-223 has biased composition (basic residues); it reads NRRRSSHRSRRGSGSPRSRRYTSRHRRRS. Residues 229-238 are compositionally biased toward basic and acidic residues; that stretch reads TSWKHNPEHR. Positions 239–257 are enriched in basic residues; sequence TSRRSRTRSPRGNRSRRRS.

Functionally, sex differentiation protein controlling female somatic sexual differentiation. May act by promoting the formation of a splicing enhancer complex. The protein is Female-specific protein transformer of Musca domestica (House fly).